The chain runs to 178 residues: MPGSALLCCLLLLAGVKTSKGHSIRGDNNCTHFPVSQTHMLRELRAAFSQVKTFFQKKDQLDNILLTDSLLQDFKGYLGCQALSEMIKFYLVEVMPQAENHGPEIKEHLNSLGEKLKTLWIQLRRCHRFLPCENKSKAVEQVKNDFNKLQDKGVYKAMNEFDIFINCIEAYVTLKMKN.

Positions 1–18 (MPGSALLCCLLLLAGVKT) are cleaved as a signal peptide. N-linked (GlcNAc...) asparagine glycosylation is present at asparagine 29. Intrachain disulfides connect cysteine 30/cysteine 126 and cysteine 80/cysteine 132. A glycan (N-linked (GlcNAc...) asparagine) is linked at asparagine 134.

Belongs to the IL-10 family. In terms of assembly, homodimer. Interacts with IL10RA and IL10RB.

Its subcellular location is the secreted. Functionally, major immune regulatory cytokine that acts on many cells of the immune system where it has profound anti-inflammatory functions, limiting excessive tissue disruption caused by inflammation. Mechanistically, IL10 binds to its heterotetrameric receptor comprising IL10RA and IL10RB leading to JAK1 and STAT2-mediated phosphorylation of STAT3. In turn, STAT3 translocates to the nucleus where it drives expression of anti-inflammatory mediators. Targets antigen-presenting cells (APCs) such as macrophages and monocytes and inhibits their release of pro-inflammatory cytokines including granulocyte-macrophage colony-stimulating factor /GM-CSF, granulocyte colony-stimulating factor/G-CSF, IL-1 alpha, IL-1 beta, IL-6, IL-8 and TNF-alpha. Also interferes with antigen presentation by reducing the expression of MHC-class II and co-stimulatory molecules, thereby inhibiting their ability to induce T cell activation. In addition, controls the inflammatory response of macrophages by reprogramming essential metabolic pathways including mTOR signaling. This chain is Interleukin-10 (Il10), found in Rattus norvegicus (Rat).